Here is a 192-residue protein sequence, read N- to C-terminus: Imidazoleglycerol-phosphate dehydratase (192 aa).

This sequence belongs to the imidazoleglycerol-phosphate dehydratase family.

It localises to the cytoplasm. It carries out the reaction D-erythro-1-(imidazol-4-yl)glycerol 3-phosphate = 3-(imidazol-4-yl)-2-oxopropyl phosphate + H2O. Its pathway is amino-acid biosynthesis; L-histidine biosynthesis; L-histidine from 5-phospho-alpha-D-ribose 1-diphosphate: step 6/9. The chain is Imidazoleglycerol-phosphate dehydratase from Caldivirga maquilingensis (strain ATCC 700844 / DSM 13496 / JCM 10307 / IC-167).